A 292-amino-acid polypeptide reads, in one-letter code: ATP synthase gamma chain (292 aa).

It belongs to the ATPase gamma chain family. As to quaternary structure, F-type ATPases have 2 components, CF(1) - the catalytic core - and CF(0) - the membrane proton channel. CF(1) has five subunits: alpha(3), beta(3), gamma(1), delta(1), epsilon(1). CF(0) has three main subunits: a, b and c.

It localises to the cell inner membrane. Its function is as follows. Produces ATP from ADP in the presence of a proton gradient across the membrane. The gamma chain is believed to be important in regulating ATPase activity and the flow of protons through the CF(0) complex. The sequence is that of ATP synthase gamma chain from Maridesulfovibrio salexigens (strain ATCC 14822 / DSM 2638 / NCIMB 8403 / VKM B-1763) (Desulfovibrio salexigens).